A 64-amino-acid polypeptide reads, in one-letter code: Alpha-conotoxin Lt14.1 (64 aa).

An N-terminal signal peptide occupies residues 1-20 (MKLSVMFIVFLMLTMPMTCA). Positions 21 to 50 (GISRSATNGGEADVRAHDKAANLMALLQER) are excised as a propeptide. 2 disulfide bridges follow: C52–C60 and C56–C63. C63 carries the cysteine amide modification.

It belongs to the conotoxin L superfamily. Post-translationally, may contain a 4-hydroxyproline. Expressed by the venom duct.

Its subcellular location is the secreted. Alpha-conotoxins act on postsynaptic membranes, they bind to the nicotinic acetylcholine receptors (nAChR) and thus inhibit them. This synthetic peptide displays analgesic activity in a hot plate assay. Analgesia is also observed against second phase pain in formalin-induced inflammatory pain model, and in a rat model of mechanically-induced pain. Effects downstream of nAChR are inhibition of calcium influx, inhibition of ERK1/2 phosphorylation and inhibition of c-fos/NOS expression. Genes associated with drug dependence are not up-regulated by this toxin. Treatment with this toxin reversed morphine withdrawal symptoms in mice. The chain is Alpha-conotoxin Lt14.1 from Conus litteratus (Lettered cone).